We begin with the raw amino-acid sequence, 167 residues long: Peptide deformylase (167 aa).

2 residues coordinate Fe cation: Cys90 and His132. Glu133 is an active-site residue. A Fe cation-binding site is contributed by His136.

This sequence belongs to the polypeptide deformylase family. The cofactor is Fe(2+).

The enzyme catalyses N-terminal N-formyl-L-methionyl-[peptide] + H2O = N-terminal L-methionyl-[peptide] + formate. Functionally, removes the formyl group from the N-terminal Met of newly synthesized proteins. Requires at least a dipeptide for an efficient rate of reaction. N-terminal L-methionine is a prerequisite for activity but the enzyme has broad specificity at other positions. The polypeptide is Peptide deformylase (Dehalococcoides mccartyi (strain ATCC BAA-2100 / JCM 16839 / KCTC 5957 / BAV1)).